The primary structure comprises 221 residues: GTP cyclohydrolase III (221 aa).

This sequence belongs to the archaeal-type GTP cyclohydrolase family.

It catalyses the reaction GTP + 3 H2O = 2-amino-5-formylamino-6-(5-phospho-D-ribosylamino)pyrimidin-4(3H)-one + 2 phosphate + 2 H(+). Its function is as follows. Catalyzes the formation of 2-amino-5-formylamino-6-ribofuranosylamino-4(3H)-pyrimidinone ribonucleotide monophosphate and inorganic phosphate from GTP. Also has an independent pyrophosphate phosphohydrolase activity. In Pyrobaculum islandicum (strain DSM 4184 / JCM 9189 / GEO3), this protein is GTP cyclohydrolase III.